The chain runs to 285 residues: Tropomyosin alpha-3 chain (285 aa).

The stretch at 1–285 (MMEAIKKKMQ…DHALNDMTSI (285 aa)) forms a coiled coil. M2 carries the post-translational modification N-acetylmethionine. N-acetylalanine is present on M2. A compositionally biased stretch (basic and acidic residues) spans 16-41 (KENALDRAEQAEAEQKQAEERSKQLE). Residues 16 to 44 (KENALDRAEQAEAEQKQAEERSKQLEDEL) are disordered. T54 carries the phosphothreonine modification. A phosphoserine mark is found at S62 and S88. The residue at position 109 (T109) is a Phosphothreonine. N6-acetyllysine is present on residues E125 and L177. S207 carries the phosphoserine modification. The residue at position 215 (Y215) is an N6-acetyllysine. The residue at position 216 (S216) is a Phosphoserine. A Phosphothreonine modification is found at T253. The residue at position 262 (Y262) is a Phosphotyrosine. S272 carries the phosphoserine modification. Residue T283 is modified to Phosphothreonine. A Phosphoserine modification is found at S284.

Belongs to the tropomyosin family. Homodimer. Heterodimer of an alpha (TPM1, TPM3 or TPM4) and a beta (TPM2) chain. Interacts with TMOD1. Interacts with TNNT1.

It localises to the cytoplasm. The protein resides in the cytoskeleton. Binds to actin filaments in muscle and non-muscle cells. Plays a central role, in association with the troponin complex, in the calcium dependent regulation of vertebrate striated muscle contraction. Smooth muscle contraction is regulated by interaction with caldesmon. In non-muscle cells is implicated in stabilizing cytoskeleton actin filaments. The sequence is that of Tropomyosin alpha-3 chain (TPM3) from Homo sapiens (Human).